The primary structure comprises 305 residues: Methionyl-tRNA formyltransferase (305 aa).

111 to 114 (SLLP) is a (6S)-5,6,7,8-tetrahydrofolate binding site.

It belongs to the Fmt family.

The catalysed reaction is L-methionyl-tRNA(fMet) + (6R)-10-formyltetrahydrofolate = N-formyl-L-methionyl-tRNA(fMet) + (6S)-5,6,7,8-tetrahydrofolate + H(+). In terms of biological role, attaches a formyl group to the free amino group of methionyl-tRNA(fMet). The formyl group appears to play a dual role in the initiator identity of N-formylmethionyl-tRNA by promoting its recognition by IF2 and preventing the misappropriation of this tRNA by the elongation apparatus. In Campylobacter jejuni subsp. jejuni serotype O:6 (strain 81116 / NCTC 11828), this protein is Methionyl-tRNA formyltransferase.